Consider the following 377-residue polypeptide: Succinyl-diaminopimelate desuccinylase (377 aa).

Histidine 75 is a Zn(2+) binding site. Residue aspartate 77 is part of the active site. Residue aspartate 106 coordinates Zn(2+). Glutamate 136 (proton acceptor) is an active-site residue. Residues glutamate 137, glutamate 165, and histidine 350 each contribute to the Zn(2+) site.

The protein belongs to the peptidase M20A family. DapE subfamily. As to quaternary structure, homodimer. It depends on Zn(2+) as a cofactor. Co(2+) serves as cofactor.

It carries out the reaction N-succinyl-(2S,6S)-2,6-diaminopimelate + H2O = (2S,6S)-2,6-diaminopimelate + succinate. The protein operates within amino-acid biosynthesis; L-lysine biosynthesis via DAP pathway; LL-2,6-diaminopimelate from (S)-tetrahydrodipicolinate (succinylase route): step 3/3. In terms of biological role, catalyzes the hydrolysis of N-succinyl-L,L-diaminopimelic acid (SDAP), forming succinate and LL-2,6-diaminopimelate (DAP), an intermediate involved in the bacterial biosynthesis of lysine and meso-diaminopimelic acid, an essential component of bacterial cell walls. This Sphingopyxis alaskensis (strain DSM 13593 / LMG 18877 / RB2256) (Sphingomonas alaskensis) protein is Succinyl-diaminopimelate desuccinylase.